The following is a 344-amino-acid chain: Phosphoribosylformylglycinamidine cyclo-ligase (344 aa).

It belongs to the AIR synthase family.

The protein resides in the cytoplasm. The enzyme catalyses 2-formamido-N(1)-(5-O-phospho-beta-D-ribosyl)acetamidine + ATP = 5-amino-1-(5-phospho-beta-D-ribosyl)imidazole + ADP + phosphate + H(+). It participates in purine metabolism; IMP biosynthesis via de novo pathway; 5-amino-1-(5-phospho-D-ribosyl)imidazole from N(2)-formyl-N(1)-(5-phospho-D-ribosyl)glycinamide: step 2/2. The polypeptide is Phosphoribosylformylglycinamidine cyclo-ligase (Neisseria gonorrhoeae (strain ATCC 700825 / FA 1090)).